The following is a 938-amino-acid chain: Isoleucine--tRNA ligase (938 aa).

The 'HIGH' region signature appears at 58 to 68 (PYANGSIHIGH). Residue Glu-561 coordinates L-isoleucyl-5'-AMP. The short motif at 602 to 606 (KMSKS) is the 'KMSKS' region element. Lys-605 contributes to the ATP binding site. Residues Cys-901, Cys-904, Cys-921, and Cys-924 each coordinate Zn(2+).

This sequence belongs to the class-I aminoacyl-tRNA synthetase family. IleS type 1 subfamily. As to quaternary structure, monomer. Zn(2+) is required as a cofactor.

Its subcellular location is the cytoplasm. The catalysed reaction is tRNA(Ile) + L-isoleucine + ATP = L-isoleucyl-tRNA(Ile) + AMP + diphosphate. In terms of biological role, catalyzes the attachment of isoleucine to tRNA(Ile). As IleRS can inadvertently accommodate and process structurally similar amino acids such as valine, to avoid such errors it has two additional distinct tRNA(Ile)-dependent editing activities. One activity is designated as 'pretransfer' editing and involves the hydrolysis of activated Val-AMP. The other activity is designated 'posttransfer' editing and involves deacylation of mischarged Val-tRNA(Ile). In Cronobacter sakazakii (strain ATCC BAA-894) (Enterobacter sakazakii), this protein is Isoleucine--tRNA ligase.